The following is a 399-amino-acid chain: Peroxisome assembly protein 12 (399 aa).

Positions Met1–Gly24 are disordered. The Peroxisomal matrix segment spans residues Met1 to Thr33. A compositionally biased stretch (low complexity) spans Ser9 to Gly24. Residues Ile34–Asn62 form a helical membrane-spanning segment. Topologically, residues Phe63–Tyr67 are cytoplasmic. A helical transmembrane segment spans residues Thr68 to Lys92. Residues Thr93–Asn136 are Peroxisomal matrix-facing. The helical transmembrane segment at Gln137–Asn168 threads the bilayer. The Cytoplasmic segment spans residues Ile169–Ser171. Residues Ser172 to Thr208 form a helical membrane-spanning segment. Over Lys209–Gln277 the chain is Peroxisomal matrix. The helical transmembrane segment at Phe278 to Val305 threads the bilayer. Topologically, residues Asn306–Ile399 are cytoplasmic. Cys334, Cys337, Cys354, and Cys357 together coordinate Zn(2+). Residues Cys334–Asn373 form an RING-type; degenerate zinc finger.

The protein belongs to the pex2/pex10/pex12 family. As to quaternary structure, component of the PEX2-PEX10-PEX12 retrotranslocation channel, composed of PEX2, PEX10 and PEX12.

Its subcellular location is the peroxisome membrane. The protein operates within protein modification; protein ubiquitination. Functionally, component of a retrotranslocation channel required for peroxisome organization by mediating export of the PEX5 receptor from peroxisomes to the cytosol, thereby promoting PEX5 recycling. The retrotranslocation channel is composed of PEX2, PEX10 and PEX12; each subunit contributing transmembrane segments that coassemble into an open channel that specifically allows the passage of PEX5 through the peroxisomal membrane. PEX12 also regulates PEX5 recycling by activating the E3 ubiquitin-protein ligase activity of PEX10. When PEX5 recycling is compromised, PEX12 stimulates PEX10-mediated polyubiquitination of PEX5, leading to its subsequent degradation. The chain is Peroxisome assembly protein 12 from Saccharomyces cerevisiae (strain ATCC 204508 / S288c) (Baker's yeast).